The sequence spans 63 residues: 2-hydroxymuconate tautomerase (63 aa).

The active-site Proton acceptor; via imino nitrogen is the P2.

It belongs to the 4-oxalocrotonate tautomerase family. Homohexamer.

The enzyme catalyses (2Z,4E)-2-hydroxyhexa-2,4-dienedioate = (3E)-2-oxohex-3-enedioate. The protein operates within xenobiotic degradation; toluene degradation. Catalyzes the ketonization of 2-hydroxymuconate stereoselectively to yield 2-oxo-3-hexenedioate. In Pseudomonas sp. (strain CF600), this protein is 2-hydroxymuconate tautomerase (dmpI).